The chain runs to 247 residues: MTILFLTMVISYFGCMKAAPMKEANVRGQGSLAYTGVRTHGTLESMNGPKAGSRGLTSLADTFEHVIEELLDEDQKVRPNEENNKDADLYTSRVMLSSQVPLEPPLLFLLEEYKNYLDAANMSMRVRRHSDPARRGELSVCDSISEWVTAADKKTAVDMSGGTVTVLEKVPVSKGQLKQYFYETKCNPMGYTKEGCRGIDKRHWNSQCRTTQSYVRALTMDSKKRIGWRFIRIDTSCVCTLTIKRGR.

The N-terminal stretch at 1-18 is a signal peptide; sequence MTILFLTMVISYFGCMKA. A propeptide spanning residues 19–128 is cleaved from the precursor; that stretch reads APMKEANVRG…AANMSMRVRR (110 aa). N121 is a glycosylation site (N-linked (GlcNAc...) asparagine). 3 disulfide bridges follow: C141–C208, C186–C237, and C196–C239.

This sequence belongs to the NGF-beta family. As to quaternary structure, monomers and homodimers. Binds to NTRK2/TRKB. Can form heterodimers with other neurotrophin family members, such as NTF3 and NTF4 (in vitro), but the physiological relevance of this is not clear. BDNF precursor form: interacts with the heterodimer formed by NGFR and SORCS2. Mature BDNF has much lower affinity for the heterodimer formed by NGFR and SORCS2. In terms of processing, N-glycosylated and glycosulfated, contrary to mature BDNF. Post-translationally, mature BDNF is produced by proteolytic removal of the propeptide, catalyzed by a FURIN family member. In addition, the precursor form is proteolytically cleaved within the propeptide, but this is not an obligatory intermediate for the production of mature BDNF. Can be converted into mature BDNF by plasmin (PLG).

Its subcellular location is the secreted. Functionally, important signaling molecule that activates signaling cascades downstream of NTRK2. During development, promotes the survival and differentiation of selected neuronal populations of the peripheral and central nervous systems. Participates in axonal growth, pathfinding and in the modulation of dendritic growth and morphology. Major regulator of synaptic transmission and plasticity at adult synapses in many regions of the CNS. The versatility of BDNF is emphasized by its contribution to a range of adaptive neuronal responses including long-term potentiation (LTP), long-term depression (LTD), certain forms of short-term synaptic plasticity, as well as homeostatic regulation of intrinsic neuronal excitability. Important signaling molecule that activates signaling cascades downstream of NTRK2. Activates signaling cascades via the heterodimeric receptor formed by NGFR and SORCS2. Signaling via NGFR and SORCS2 plays a role in synaptic plasticity and long-term depression (LTD). Binding to NGFR and SORCS2 promotes neuronal apoptosis. Promotes neuronal growth cone collapse. This is Neurotrophic factor BDNF precursor form (BDNF) from Ailurus fulgens (Himalayan red panda).